A 128-amino-acid chain; its full sequence is Large ribosomal subunit protein bL19 (128 aa).

Belongs to the bacterial ribosomal protein bL19 family.

Functionally, this protein is located at the 30S-50S ribosomal subunit interface and may play a role in the structure and function of the aminoacyl-tRNA binding site. In Caldicellulosiruptor bescii (strain ATCC BAA-1888 / DSM 6725 / KCTC 15123 / Z-1320) (Anaerocellum thermophilum), this protein is Large ribosomal subunit protein bL19.